The following is a 691-amino-acid chain: POU domain, class 6, transcription factor 2 (691 aa).

3 disordered regions span residues 1–61 (MIAG…RGNT), 188–297 (QQQQ…LQLV), and 435–461 (GQAA…SALS). Residues 17 to 28 (MNAELRGEDKAA) are compositionally biased toward basic and acidic residues. Low complexity-rich tracts occupy residues 188–197 (QQQQQQQQQQ) and 206–216 (QHPQPASQAPP). Positions 217–237 (QSQPTPPHQPPPASQQLPAPP) are enriched in pro residues. Residues 238–272 (AQLEQATQPQQHQPHSHPQNQTQNQPSPTQQSSSP) are compositionally biased toward low complexity. Residues 437-447 (AATSHSPVRQA) are compositionally biased toward polar residues. The span at 448-458 (SSSSSSSSSSS) shows a compositional bias: low complexity. One can recognise a POU-specific domain in the interval 476–586 (VDGVNLEEIR…VLERWMAEAE (111 aa)). Residues 607 to 666 (KRKRRTSFTPQALEILNAHFEKNTHPSGQEMTEIAEKLNYDREVVRVWFCNKRQALKNTI) constitute a DNA-binding region (homeobox). The interval 670–691 (KQHEPTSAAPLEPLADSPEENC) is disordered.

It belongs to the POU transcription factor family. Class-6 subfamily. In terms of tissue distribution, expressed in kidney, heart, muscle, spleen and ovary, but not in lung.

It is found in the nucleus. Its function is as follows. Probable transcription factor likely to be involved in early steps in the differentiation of amacrine and ganglion cells. Recognizes and binds to the DNA sequence 5'-ATGCAAAT-3'. This Mus musculus (Mouse) protein is POU domain, class 6, transcription factor 2 (Pou6f2).